The following is a 366-amino-acid chain: MKDLTLNDLPIREELRGQSAYGAPQLDVDVRLNTNENPYPPSEALVEELARVVAEQASNLNRYPERDAVELRTELARYITKCTGVPVTYEQLWAANGSNEVLQQLLQAFGGPGRTVLGFQPSYSMHPILAQGTQTTFINCPRDKEFRIDVDAALAAITTHQPNIVFVTTPNNPTGDVTSLDTIKKILDVAPGIVIVDEAYAEFSEQPSAISLLENYPTKLVVSRTMSKAFDFAGGRLGYFVAHKAFIDAVMLVRLPYHLSQLSQAAAIVALRHSEETLATVAKLVAERKRVQQGLLELGFEIVPSESNFLFFGHFEDQHAAWQAFLDRKVLIRDVSVSGYLRATVGLPEENDAFLNAAREVAQQFL.

N6-(pyridoxal phosphate)lysine is present on lysine 228.

It belongs to the class-II pyridoxal-phosphate-dependent aminotransferase family. Histidinol-phosphate aminotransferase subfamily. Homodimer. It depends on pyridoxal 5'-phosphate as a cofactor.

It catalyses the reaction L-histidinol phosphate + 2-oxoglutarate = 3-(imidazol-4-yl)-2-oxopropyl phosphate + L-glutamate. It functions in the pathway amino-acid biosynthesis; L-histidine biosynthesis; L-histidine from 5-phospho-alpha-D-ribose 1-diphosphate: step 7/9. In Corynebacterium diphtheriae (strain ATCC 700971 / NCTC 13129 / Biotype gravis), this protein is Histidinol-phosphate aminotransferase.